Consider the following 660-residue polypeptide: Potassium voltage-gated channel subfamily KQT member 1 (660 aa).

Residues 1-18 (MSSEVKSRWSGSGSQKSG) show a composition bias toward polar residues. Residues 1–67 (MSSEVKSRWS…PESRAADSRA (67 aa)) are disordered. Residues 1-113 (MSSEVKSRWS…YNFLERPTGW (113 aa)) are Cytoplasmic-facing. Residues 53–67 (STDKNPESRAADSRA) show a composition bias toward basic and acidic residues. A helical membrane pass occupies residues 114 to 135 (KCFIYHFTVFLIVLVCLIFSVM). Over 136–146 (STIEQYHYFAN) the chain is Extracellular. A helical transmembrane segment spans residues 147 to 169 (RALVWMEIVLVVFFGTEYIVRLW). Residues 170–185 (SAGCRSKYVGFWGRLR) lie on the Cytoplasmic side of the membrane. The helical transmembrane segment at 186–211 (FARKPISIIDLIVVVASVIVLCVGSN) threads the bilayer. The Extracellular portion of the chain corresponds to 212-219 (GQVFATSA). A helical; Voltage-sensor transmembrane segment spans residues 220–235 (IRGIRFLQILRMLHVD). Topologically, residues 236-253 (RQGGTWRLLGSVVFIHRQ) are cytoplasmic. Glutamine 237 is a binding site for a 1,2-diacyl-sn-glycero-3-phospho-(1D-myo-inositol-4,5-bisphosphate). The helical transmembrane segment at 254 to 276 (ELITTLYIGFLGLIFSSYFVYLA) threads the bilayer. Residues 277–292 (EKDAVDDSGSQQFGSY) lie on the Extracellular side of the membrane. The segment at residues 293 to 313 (ADALWWGVVTVTTIGYGDKVP) is an intramembrane region (pore-forming). Over 314-315 (QT) the chain is Extracellular. The helical transmembrane segment at 316–341 (WIGRTIASCFSVFAISFFALPAGILG) threads the bilayer. Over 342–660 (SGFALKVQQK…RKDQDNQPDL (319 aa)) the chain is Cytoplasmic. Residues 399 to 426 (SPSPKTKKSVGKRKKLKTDKDNGLNSEK) are disordered. The span at 403–415 (KTKKSVGKRKKLK) shows a compositional bias: basic residues. The stretch at 579-615 (KNTIGARLNRVEEKFVHMDQKLNTITDMLHHLVAHQQ) forms a coiled coil.

This sequence belongs to the potassium channel family. KQT (TC 1.A.1.15) subfamily. Kv7.1/KCNQ1 sub-subfamily. In terms of assembly, tetramer. Heterotetramer with KCNE1; targets to the membrane raft. Interacts (via C-terminus) with CALM; forms a heterotetramer in a calcium-independent manner. Interacts with KCNE2; form a heterooligomer complex that targets to the membrane raft and leading to currents with an apparently instantaneous activation, a rapid deactivation process and a linear current-voltage relationship and decreases the amplitude of the outward current. Interacts with KCNE3; four KCNE3 molecules are bound to one KCNQ1 tetramer (4:4 KCNQ1:KCNE3 stoichiometry); alters membrane raft localization; affects KCNQ1 structure and gating properties. Interacts with KCNE4; impairs KCNQ1 localization in lipid rafts and inhibits voltage-gated potassium channel activity. Interacts with KCNE5; impairs KCNQ1 localization in lipid rafts and only conducts current upon strong and continued depolarization. Expressed only in rectal gland and heart. Faintly expressed in intestine. Undetectable in kidney, brain, testis, liver and gills.

The protein resides in the cell membrane. It localises to the cytoplasmic vesicle membrane. It is found in the membrane raft. The protein localises to the endoplasmic reticulum. Its subcellular location is the basolateral cell membrane. It catalyses the reaction K(+)(in) = K(+)(out). With respect to regulation, PIP2 molecule is essential to activate KCNQ channels by inducing the coupling of the voltage-sensing domain (VSD) and the pore-forming domain (PD). Upon channel activation, PIP2 disrupts the VSD-calmodulin/CALM interactions, causing the release of CALM from the VSD which triggers the opening of the gate. Calcium potentiates KCNQ1 channel current through calcium-bound CALM. Calcium-bound CALM competes with PIP2 to stabilize the channel open state. Pore-forming subunit of the voltage-gated potassium (Kv) channel involved in the regulation of cardiomyocyte excitability and important in normal development and functions of myocardium, inner ear, stomach and colon. Associates with KCNE beta subunits that modulates current kinetics. Induces a voltage-dependent by rapidly activating and slowly deactivating potassium-selective outward current. Also promotes a delayed voltage activated potassium current showing outward rectification characteristic. During beta-adrenergic receptor stimulation participates in cardiac repolarization by associating with KCNE1 to form the I(Ks) cardiac potassium current that increases the amplitude and slows down the activation kinetics of outward potassium current I(Ks). When associated with KCNE3, forms the potassium channel that is important for cyclic AMP-stimulated intestinal secretion of chloride ions. When associated with KCNE2, forms a heterooligomer complex leading to currents with an apparently instantaneous activation, a rapid deactivation process and a linear current-voltage relationship and decreases the amplitude of the outward current. When associated with KCNE4, inhibits voltage-gated potassium channel activity. When associated with KCNE5, this complex only conducts current upon strong and continued depolarization. The polypeptide is Potassium voltage-gated channel subfamily KQT member 1 (Squalus acanthias (Spiny dogfish)).